We begin with the raw amino-acid sequence, 268 residues long: Phosphatidylglycerol--prolipoprotein diacylglyceryl transferase (268 aa).

The next 4 helical transmembrane spans lie at 14-34 (LGPI…FAGW), 57-77 (LTFY…IIFY), 90-110 (FFLW…LIAF), and 117-137 (IGAN…IGLG). A 1,2-diacyl-sn-glycero-3-phospho-(1'-sn-glycerol) is bound at residue R140. The next 3 helical transmembrane spans lie at 174 to 194 (QLFE…LVTI), 200 to 220 (YLVL…CEFF), and 240 to 260 (ILSI…FIKI).

Belongs to the Lgt family.

Its subcellular location is the cell inner membrane. The catalysed reaction is L-cysteinyl-[prolipoprotein] + a 1,2-diacyl-sn-glycero-3-phospho-(1'-sn-glycerol) = an S-1,2-diacyl-sn-glyceryl-L-cysteinyl-[prolipoprotein] + sn-glycerol 1-phosphate + H(+). It functions in the pathway protein modification; lipoprotein biosynthesis (diacylglyceryl transfer). Functionally, catalyzes the transfer of the diacylglyceryl group from phosphatidylglycerol to the sulfhydryl group of the N-terminal cysteine of a prolipoprotein, the first step in the formation of mature lipoproteins. The polypeptide is Phosphatidylglycerol--prolipoprotein diacylglyceryl transferase (Francisella tularensis subsp. tularensis (strain FSC 198)).